Consider the following 330-residue polypeptide: Short chain dehydrogenase macD (330 aa).

Positions 57, 86, 113, 204, and 208 each coordinate NADP(+). The active-site Proton donor is the tyrosine 204. Residue lysine 208 is the Lowers pKa of active site Tyr of the active site.

It belongs to the short-chain dehydrogenases/reductases (SDR) family.

It participates in secondary metabolite biosynthesis; terpenoid biosynthesis. Its function is as follows. Short chain dehydrogenase; part of the gene cluster that mediates the biosynthesis of macrophorins, isoprenoid epoxycyclohexenones containing cyclized drimane moieties. The first step of the pathway is the synthesis of 6-methylsalicylic acid (6-MSA) by the polyketide synthase macA. 6-MSA is then converted to m-cresol by the decarboxylase macB. The cytochrome P450 monooxygenase macC then catalyzes the oxidation of m-cresol to toluquinol. Epoxidation of toluquinol is then performed by the short chain dehydrogenase macD, with the help of macE, and a further prenylation by macG leads to 7-deacetoxyyanuthone A. The next step is the hydroxylation of C-22 of 7-deacetoxyyanuthone A by the cytochrome P450 monooxygenase macH to yield 22-deacetylyanuthone A. O-Mevalon transferase macI then attaches mevalon to the hydroxyl group of 22-deacetylyanuthone A to produce yanuthone E. The terpene cyclase macJ catalyzes the cyclization of 22-deacetylyanuthone A to macrophorin A. MacJ is also able to catalyze cyclization of yanuthone E and 7-deacetoxyyanuthone A to their corresponding macrophorins. The macJ products can be further modified by macH and macJ, as well as by the FAD-dependent monooxygenase macF, to produce additional macrophorins, including 4'-oxomacrophorin A, 4'-oxomacrophorin D and 4'-oxomacrophorin E. This Penicillium terrestre protein is Short chain dehydrogenase macD.